Here is a 101-residue protein sequence, read N- to C-terminus: NAD(P)H-quinone oxidoreductase subunit 4L, chloroplastic (101 aa).

A run of 3 helical transmembrane segments spans residues 2–22, 32–52, and 61–81; these read MLEH…YGLI, MCLE…SDFF, and IFSI…SAIV.

It belongs to the complex I subunit 4L family. NDH is composed of at least 16 different subunits, 5 of which are encoded in the nucleus.

The protein localises to the plastid. The protein resides in the chloroplast thylakoid membrane. It carries out the reaction a plastoquinone + NADH + (n+1) H(+)(in) = a plastoquinol + NAD(+) + n H(+)(out). It catalyses the reaction a plastoquinone + NADPH + (n+1) H(+)(in) = a plastoquinol + NADP(+) + n H(+)(out). In terms of biological role, NDH shuttles electrons from NAD(P)H:plastoquinone, via FMN and iron-sulfur (Fe-S) centers, to quinones in the photosynthetic chain and possibly in a chloroplast respiratory chain. The immediate electron acceptor for the enzyme in this species is believed to be plastoquinone. Couples the redox reaction to proton translocation, and thus conserves the redox energy in a proton gradient. The polypeptide is NAD(P)H-quinone oxidoreductase subunit 4L, chloroplastic (Gossypium hirsutum (Upland cotton)).